The chain runs to 489 residues: Anthranilate synthase component 1 1 (489 aa).

262 to 264 (PYS) contributes to the L-tryptophan binding site. Residues 288 to 309 (DRIETEPIAGTRPRGETPDADD) form a disordered region. 297–298 (GT) provides a ligand contact to chorismate. Positions 300–309 (PRGETPDADD) are enriched in basic and acidic residues. Position 324 (Glu324) interacts with Mg(2+). Chorismate is bound by residues Tyr412, Arg432, 446-448 (GAG), and Gly448. Residue Glu461 participates in Mg(2+) binding.

Belongs to the anthranilate synthase component I family. Tetramer of two components I and two components II. Mg(2+) is required as a cofactor.

The enzyme catalyses chorismate + L-glutamine = anthranilate + pyruvate + L-glutamate + H(+). The protein operates within amino-acid biosynthesis; L-tryptophan biosynthesis; L-tryptophan from chorismate: step 1/5. This chain is Anthranilate synthase component 1 1 (trpE1), found in Haloarcula marismortui (strain ATCC 43049 / DSM 3752 / JCM 8966 / VKM B-1809) (Halobacterium marismortui).